The following is a 174-amino-acid chain: Shikimate kinase 2 (174 aa).

12–17 (GAGKTT) is an ATP binding site. The Mg(2+) site is built by Thr16 and Asp32. The substrate site is built by Asp34, Arg58, and Gly79. An LID domain region spans residues 112–126 (AEDPEEAQRPSLTGK). Arg120 provides a ligand contact to ATP. Arg139 provides a ligand contact to substrate. ATP is bound at residue Gln155.

Belongs to the shikimate kinase family. AroL subfamily. Monomer. The cofactor is Mg(2+).

It localises to the cytoplasm. The catalysed reaction is shikimate + ATP = 3-phosphoshikimate + ADP + H(+). The protein operates within metabolic intermediate biosynthesis; chorismate biosynthesis; chorismate from D-erythrose 4-phosphate and phosphoenolpyruvate: step 5/7. Its function is as follows. Catalyzes the specific phosphorylation of the 3-hydroxyl group of shikimic acid using ATP as a cosubstrate. In Yersinia pseudotuberculosis serotype IB (strain PB1/+), this protein is Shikimate kinase 2.